Reading from the N-terminus, the 286-residue chain is Glucose import system permease protein GlcT (286 aa).

6 helical membrane passes run 6-26 (TIIL…LVIW), 71-91 (VILV…LYFL), 103-123 (IVIY…LWLF), 154-174 (LVLV…LAGF), 199-219 (ILIP…FLFS), and 260-280 (VATM…LTVI). The region spanning 63–275 (LLHSIELSVI…LIATIIIIPY (213 aa)) is the ABC transmembrane type-1 domain.

Belongs to the binding-protein-dependent transport system permease family. In terms of assembly, the complex is composed of two ATP-binding proteins (GlcV), two transmembrane proteins (GlcT and GlcU) and a solute-binding protein (GlcS).

The protein localises to the cell membrane. In terms of biological role, part of the ABC transporter complex GlcSTUV involved in glucose uptake. Responsible for the translocation of the substrate across the membrane. In Saccharolobus solfataricus (strain ATCC 35092 / DSM 1617 / JCM 11322 / P2) (Sulfolobus solfataricus), this protein is Glucose import system permease protein GlcT.